We begin with the raw amino-acid sequence, 122 residues long: MARIAGIDLPKKKKIEYALPYIYGIGLTTSRKILKDTGIDPEKRVYELTEDEVSILNKEIQSNYIVEGELRKIVQLNIKELMDLGCYRGLRHRRGLPVRGQRTKTNARTRKGKRKTVGAKAK.

A disordered region spans residues 98–122 (VRGQRTKTNARTRKGKRKTVGAKAK).

The protein belongs to the universal ribosomal protein uS13 family. In terms of assembly, part of the 30S ribosomal subunit. Forms a loose heterodimer with protein S19. Forms two bridges to the 50S subunit in the 70S ribosome.

Functionally, located at the top of the head of the 30S subunit, it contacts several helices of the 16S rRNA. In the 70S ribosome it contacts the 23S rRNA (bridge B1a) and protein L5 of the 50S subunit (bridge B1b), connecting the 2 subunits; these bridges are implicated in subunit movement. Contacts the tRNAs in the A and P-sites. The polypeptide is Small ribosomal subunit protein uS13 (Nautilia profundicola (strain ATCC BAA-1463 / DSM 18972 / AmH)).